Reading from the N-terminus, the 699-residue chain is Elongation factor G (699 aa).

The tr-type G domain occupies 8–288 (EDYRNFGIMA…AVVDYLPSPI (281 aa)). GTP-binding positions include 17 to 24 (AHIDAGKT), 86 to 90 (DTPGH), and 140 to 143 (NKMD).

Belongs to the TRAFAC class translation factor GTPase superfamily. Classic translation factor GTPase family. EF-G/EF-2 subfamily.

It is found in the cytoplasm. Functionally, catalyzes the GTP-dependent ribosomal translocation step during translation elongation. During this step, the ribosome changes from the pre-translocational (PRE) to the post-translocational (POST) state as the newly formed A-site-bound peptidyl-tRNA and P-site-bound deacylated tRNA move to the P and E sites, respectively. Catalyzes the coordinated movement of the two tRNA molecules, the mRNA and conformational changes in the ribosome. The polypeptide is Elongation factor G (Sinorhizobium fredii (strain NBRC 101917 / NGR234)).